The primary structure comprises 313 residues: Homoserine O-succinyltransferase (313 aa).

Residue C142 is the Acyl-thioester intermediate of the active site. The substrate site is built by K163 and S192. H235 acts as the Proton acceptor in catalysis. Residue E237 is part of the active site. Position 249 (R249) interacts with substrate.

The protein belongs to the MetA family.

It localises to the cytoplasm. It catalyses the reaction L-homoserine + succinyl-CoA = O-succinyl-L-homoserine + CoA. The protein operates within amino-acid biosynthesis; L-methionine biosynthesis via de novo pathway; O-succinyl-L-homoserine from L-homoserine: step 1/1. In terms of biological role, transfers a succinyl group from succinyl-CoA to L-homoserine, forming succinyl-L-homoserine. The chain is Homoserine O-succinyltransferase from Shewanella baltica (strain OS223).